Reading from the N-terminus, the 246-residue chain is Orotidine 5'-phosphate decarboxylase (246 aa).

Residues D22, K44, 71-80 (DLKYHDIPHT), T130, R191, Q201, G221, and R222 contribute to the substrate site. K73 (proton donor) is an active-site residue.

The protein belongs to the OMP decarboxylase family. Type 1 subfamily. As to quaternary structure, homodimer.

The enzyme catalyses orotidine 5'-phosphate + H(+) = UMP + CO2. The protein operates within pyrimidine metabolism; UMP biosynthesis via de novo pathway; UMP from orotate: step 2/2. Catalyzes the decarboxylation of orotidine 5'-monophosphate (OMP) to uridine 5'-monophosphate (UMP). This Neisseria meningitidis serogroup B (strain ATCC BAA-335 / MC58) protein is Orotidine 5'-phosphate decarboxylase.